The primary structure comprises 479 residues: Bifunctional protein HldE (479 aa).

Residues methionine 1–threonine 322 form a ribokinase region. Asparagine 198–glutamate 201 serves as a coordination point for ATP. Aspartate 267 is a catalytic residue. Positions phenylalanine 347–serine 479 are cytidylyltransferase.

In the N-terminal section; belongs to the carbohydrate kinase PfkB family. This sequence in the C-terminal section; belongs to the cytidylyltransferase family. In terms of assembly, homodimer.

The enzyme catalyses D-glycero-beta-D-manno-heptose 7-phosphate + ATP = D-glycero-beta-D-manno-heptose 1,7-bisphosphate + ADP + H(+). It carries out the reaction D-glycero-beta-D-manno-heptose 1-phosphate + ATP + H(+) = ADP-D-glycero-beta-D-manno-heptose + diphosphate. It functions in the pathway nucleotide-sugar biosynthesis; ADP-L-glycero-beta-D-manno-heptose biosynthesis; ADP-L-glycero-beta-D-manno-heptose from D-glycero-beta-D-manno-heptose 7-phosphate: step 1/4. Its pathway is nucleotide-sugar biosynthesis; ADP-L-glycero-beta-D-manno-heptose biosynthesis; ADP-L-glycero-beta-D-manno-heptose from D-glycero-beta-D-manno-heptose 7-phosphate: step 3/4. In terms of biological role, catalyzes the phosphorylation of D-glycero-D-manno-heptose 7-phosphate at the C-1 position to selectively form D-glycero-beta-D-manno-heptose-1,7-bisphosphate. Catalyzes the ADP transfer from ATP to D-glycero-beta-D-manno-heptose 1-phosphate, yielding ADP-D-glycero-beta-D-manno-heptose. The chain is Bifunctional protein HldE from Gluconobacter oxydans (strain 621H) (Gluconobacter suboxydans).